A 78-amino-acid chain; its full sequence is D-alanyl carrier protein (78 aa).

The Carrier domain occupies 1–78; it reads MAFRENVLEI…MIITQLEALK (78 aa). The residue at position 36 (Ser-36) is an O-(pantetheine 4'-phosphoryl)serine.

It belongs to the DltC family. Post-translationally, 4'-phosphopantetheine is transferred from CoA to a specific serine of apo-DCP.

It is found in the cytoplasm. The protein operates within cell wall biogenesis; lipoteichoic acid biosynthesis. Carrier protein involved in the D-alanylation of lipoteichoic acid (LTA). The loading of thioester-linked D-alanine onto DltC is catalyzed by D-alanine--D-alanyl carrier protein ligase DltA. The DltC-carried D-alanyl group is further transferred to cell membrane phosphatidylglycerol (PG) by forming an ester bond, probably catalyzed by DltD. D-alanylation of LTA plays an important role in modulating the properties of the cell wall in Gram-positive bacteria, influencing the net charge of the cell wall. The polypeptide is D-alanyl carrier protein (Listeria innocua serovar 6a (strain ATCC BAA-680 / CLIP 11262)).